The sequence spans 483 residues: Keratin, type II cytoskeletal 8 (483 aa).

Positions 1 to 25 (MSVRVTQKSYKMSTSGPRAFSSRSF) are enriched in polar residues. The tract at residues 1 to 43 (MSVRVTQKSYKMSTSGPRAFSSRSFTSGPGARISSSSFSRVGS) is disordered. Residues 1–90 (MSVRVTQKSY…DPNIQAVRTQ (90 aa)) are head. Phosphoserine; by PKC/PRKCE is present on Ser-9. A Glycyl lysine isopeptide (Lys-Gly) (interchain with G-Cter in SUMO2) cross-link involves residue Lys-11. 4 positions are modified to phosphoserine: Ser-13, Ser-15, Ser-21, and Ser-22. An Omega-N-methylarginine modification is found at Arg-23. Phosphoserine; by PKC/PRKCE is present on Ser-24. Ser-24 is subject to Phosphoserine. Position 26 is a phosphothreonine (Thr-26). The span at 26-43 (TSGPGARISSSSFSRVGS) shows a compositional bias: low complexity. Ser-27 is subject to Phosphoserine. Position 32 is an omega-N-methylarginine (Arg-32). Phosphoserine occurs at positions 34, 37, and 39. Arg-40 carries the omega-N-methylarginine modification. Ser-43, Ser-44, and Ser-47 each carry phosphoserine. Residue Arg-49 is modified to Asymmetric dimethylarginine; alternate. Arg-49 carries the omega-N-methylarginine; alternate modification. The residue at position 51 (Ser-51) is a Phosphoserine. The coil 1A stretch occupies residues 91 to 126 (EKEQIKTLNNKFASFIDKVRFLEQQNKMLETKWSLL). Residues 91 to 402 (EKEQIKTLNN…KLLEGEESRL (312 aa)) enclose the IF rod domain. Residue Lys-101 is modified to N6-malonyllysine. Residues Lys-122 and Lys-130 each participate in a glycyl lysine isopeptide (Lys-Gly) (interchain with G-Cter in SUMO2) cross-link. Residues 127–143 (QQQKTSRSNMDNMFESY) form a linker 1 region. Positions 144–235 (INNLRRQLEA…QIHEEEIREL (92 aa)) are coil 1B. A Glycyl lysine isopeptide (Lys-Gly) (interchain with G-Cter in SUMO1); alternate cross-link involves residue Lys-197. A Glycyl lysine isopeptide (Lys-Gly) (interchain with G-Cter in SUMO2); alternate cross-link involves residue Lys-197. Lys-207 carries the post-translational modification N6-acetyllysine. The segment at 236 to 259 (QSQISDTSVVLSMDNSRSLDMDSI) is linker 12. 3 positions are modified to phosphoserine: Ser-253, Ser-258, and Ser-274. Positions 260–398 (IAEVRAQYEE…ATYRKLLEGE (139 aa)) are coil 2. The tract at residues 261–382 (AEVRAQYEEI…EYQELMNVKL (122 aa)) is necessary for interaction with PNN. Lys-285 participates in a covalent cross-link: Glycyl lysine isopeptide (Lys-Gly) (interchain with G-Cter in SUMO2). Residue Lys-295 forms a Glycyl lysine isopeptide (Lys-Gly) (interchain with G-Cter in SUMO2); alternate linkage. At Lys-295 the chain carries N6-acetyllysine; alternate. Lys-304 is covalently cross-linked (Glycyl lysine isopeptide (Lys-Gly) (interchain with G-Cter in SUMO2)). Lys-325 participates in a covalent cross-link: Glycyl lysine isopeptide (Lys-Gly) (interchain with G-Cter in SUMO2); alternate. Lys-325 is modified (N6-acetyllysine; alternate). Lys-393 is covalently cross-linked (Glycyl lysine isopeptide (Lys-Gly) (interchain with G-Cter in SUMO2)). Residues 399–483 (ESRLESGMQN…VSESSDIMSK (85 aa)) form a tail region. A phosphoserine mark is found at Ser-400, Ser-404, Ser-410, Ser-417, Ser-424, Ser-426, and Ser-432. Lys-472 participates in a covalent cross-link: Glycyl lysine isopeptide (Lys-Gly) (interchain with G-Cter in SUMO1); alternate. Lys-472 is covalently cross-linked (Glycyl lysine isopeptide (Lys-Gly) (interchain with G-Cter in SUMO2); alternate). Phosphoserine is present on residues Ser-475, Ser-477, Ser-478, and Ser-482.

Belongs to the intermediate filament family. As to quaternary structure, heterotetramer of two type I and two type II keratins. Forms a heterodimer with KRT18. Associates with KRT20. Interacts with PNN. When associated with KRT19, interacts with DMD. Interacts with TCHP. Interacts with APEX1. Interacts with GPER1. Interacts with EPPK1. Interacts with PKP1 and PKP2. O-glycosylated. O-GlcNAcylation at multiple sites increases solubility, and decreases stability by inducing proteasomal degradation. Post-translationally, O-glycosylated (O-GlcNAcylated), in a cell cycle-dependent manner. In terms of tissue distribution, expressed in cardiac and striated muscle. Expressed at Z-lines within the muscle fibers and at Z-line and M-line domains at costameres at the sarcolemmal membrane (at protein level). Observed in coagulating gland, bladder, salivary gland, kidney, spleen, thymus, lung and heart. Also observed in ventral prostate, seminal vesicle and liver where expression increases following castration.

It localises to the cytoplasm. Its subcellular location is the nucleus. The protein localises to the nucleoplasm. The protein resides in the nucleus matrix. Functionally, together with KRT19, helps to link the contractile apparatus to dystrophin at the costameres of striated muscle. This chain is Keratin, type II cytoskeletal 8 (Krt8), found in Rattus norvegicus (Rat).